A 72-amino-acid chain; its full sequence is UPF0154 protein RBAM_017710 (72 aa).

A helical transmembrane segment spans residues 4–24 (WVGILVGVVALLIGVALGFFI).

It belongs to the UPF0154 family.

It is found in the cell membrane. In Bacillus velezensis (strain DSM 23117 / BGSC 10A6 / LMG 26770 / FZB42) (Bacillus amyloliquefaciens subsp. plantarum), this protein is UPF0154 protein RBAM_017710.